The sequence spans 70 residues: Large ribosomal subunit protein eL38 (70 aa).

The protein belongs to the eukaryotic ribosomal protein eL38 family.

This chain is Large ribosomal subunit protein eL38 (rpl-38), found in Ostertagia ostertagi (Brown stomach worm).